The chain runs to 283 residues: Formamidopyrimidine-DNA glycosylase (283 aa).

Pro2 (schiff-base intermediate with DNA) is an active-site residue. The Proton donor role is filled by Glu3. Lys61 functions as the Proton donor; for beta-elimination activity in the catalytic mechanism. The DNA site is built by His94, Arg113, and Lys159. Residues 245 to 279 form an FPG-type zinc finger; it reads DAYGREGESCRRCGAVMRREKFMNRSSFYCPKCQP. Catalysis depends on Arg269, which acts as the Proton donor; for delta-elimination activity.

It belongs to the FPG family. Monomer. Zn(2+) is required as a cofactor.

The enzyme catalyses Hydrolysis of DNA containing ring-opened 7-methylguanine residues, releasing 2,6-diamino-4-hydroxy-5-(N-methyl)formamidopyrimidine.. The catalysed reaction is 2'-deoxyribonucleotide-(2'-deoxyribose 5'-phosphate)-2'-deoxyribonucleotide-DNA = a 3'-end 2'-deoxyribonucleotide-(2,3-dehydro-2,3-deoxyribose 5'-phosphate)-DNA + a 5'-end 5'-phospho-2'-deoxyribonucleoside-DNA + H(+). Its function is as follows. Involved in base excision repair of DNA damaged by oxidation or by mutagenic agents. Acts as a DNA glycosylase that recognizes and removes damaged bases. Has a preference for oxidized purines, such as 7,8-dihydro-8-oxoguanine (8-oxoG). Has AP (apurinic/apyrimidinic) lyase activity and introduces nicks in the DNA strand. Cleaves the DNA backbone by beta-delta elimination to generate a single-strand break at the site of the removed base with both 3'- and 5'-phosphates. The polypeptide is Formamidopyrimidine-DNA glycosylase (Mycobacterium avium (strain 104)).